Here is a 173-residue protein sequence, read N- to C-terminus: Fimbrial protein PrsE (173 aa).

An N-terminal signal peptide occupies residues 1–24; the sequence is MKKIRGLCLPVMLGAVLMSQHVHA.

It is found in the secreted. It localises to the fimbrium. Functionally, fimbriae (also called pili), polar filaments radiating from the surface of the bacterium to a length of 0.5-1.5 micrometers and numbering 100-300 per cell, enable bacteria to colonize the epithelium of specific host organs. The protein is Fimbrial protein PrsE (prsE) of Escherichia coli.